The primary structure comprises 201 residues: Lymphotoxin-alpha (201 aa).

The signal sequence occupies residues 1-27; sequence MTSSGVLCLLGALSLQVLLLQPPGAQG. The disordered stretch occupies residues 23 to 52; the sequence is PGAQGAPNPDNSHSSSPAPPQTAQHLSQKS. The segment covering 31–51 has biased composition (polar residues); that stretch reads PDNSHSSSPAPPQTAQHLSQK. The region spanning 60 to 201 is the THD domain; the sequence is PAAHLVGDPS…SSVFFGAFAL (142 aa). N-linked (GlcNAc...) asparagine glycosylation occurs at Asn-93. Cys-117 and Cys-152 form a disulfide bridge.

Belongs to the tumor necrosis factor family. Homotrimer, and heterotrimer of either two LTB and one LTA subunits or (less prevalent) two LTA and one LTB subunits. Interacts with TNFRSF14.

It localises to the secreted. The protein resides in the membrane. Functionally, cytokine that in its homotrimeric form binds to TNFRSF1A/TNFR1, TNFRSF1B/TNFBR and TNFRSF14/HVEM. In its heterotrimeric form with LTB binds to TNFRSF3/LTBR. Lymphotoxin is produced by lymphocytes and is cytotoxic for a wide range of tumor cells in vitro and in vivo. The chain is Lymphotoxin-alpha (LTA) from Notamacropus eugenii (Tammar wallaby).